The following is a 103-amino-acid chain: N(4)-acetylcytidine amidohydrolase (103 aa).

In terms of domain architecture, ASCH spans 6–101 (ITFFQRFQDD…QIQFYVIEFK (96 aa)). Lys21 functions as the Proton acceptor in the catalytic mechanism. Catalysis depends on Thr24, which acts as the Nucleophile. Catalysis depends on Glu74, which acts as the Proton donor.

Belongs to the N(4)-acetylcytidine amidohydrolase family.

The catalysed reaction is N(4)-acetylcytidine + H2O = cytidine + acetate + H(+). It carries out the reaction N(4)-acetyl-2'-deoxycytidine + H2O = 2'-deoxycytidine + acetate + H(+). The enzyme catalyses N(4)-acetylcytosine + H2O = cytosine + acetate + H(+). Its function is as follows. Catalyzes the hydrolysis of N(4)-acetylcytidine (ac4C). This chain is N(4)-acetylcytidine amidohydrolase (yqfB), found in Escherichia coli (strain SMS-3-5 / SECEC).